Consider the following 335-residue polypeptide: Ubiquinone biosynthesis protein COQ4, mitochondrial (335 aa).

Residues 1-10 constitute a mitochondrion transit peptide; sequence MLRLSLLRST. Zn(2+) is bound by residues His-210, Asp-211, His-214, and Glu-226.

The protein belongs to the COQ4 family. As to quaternary structure, component of a multi-subunit COQ enzyme complex, composed of at least COQ3, COQ4, COQ5, COQ6, COQ7 and COQ9. Interacts with COQ3. Zn(2+) serves as cofactor.

The protein resides in the mitochondrion inner membrane. The catalysed reaction is 4-hydroxy-3-methoxy-5-(all-trans-hexaprenyl)benzoate + H(+) = 2-methoxy-6-(all-trans-hexaprenyl)phenol + CO2. It functions in the pathway cofactor biosynthesis; ubiquinone biosynthesis. Its function is as follows. Lyase that catalyzes the C1-decarboxylation of 4-hydroxy-3-methoxy-5-(all-trans-hexaprenyl)benzoic acid into 2-methoxy-6-(all-trans-hexaprenyl)phenol during ubiquinone biosynthesis. May play a role in organizing a multi-subunit COQ enzyme complex required for coenzyme Q biosynthesis. Required for steady-state levels of COQ3, COQ4, COQ6, COQ7 and COQ9 polypeptides. The polypeptide is Ubiquinone biosynthesis protein COQ4, mitochondrial (Saccharomyces cerevisiae (strain ATCC 204508 / S288c) (Baker's yeast)).